The sequence spans 453 residues: Cytochrome P450 monooxygenase PC-20 (453 aa).

Helical transmembrane passes span 5 to 25 (LGPF…LCVI) and 49 to 69 (LGVV…LFCV). Cys387 is a binding site for heme.

Belongs to the cytochrome P450 family. The cofactor is heme.

It is found in the membrane. The protein operates within secondary metabolite biosynthesis. Cytochrome P450 monooxygenase; part of the gene cluster that mediates the biosynthesis of the indole diterpenes penitrems. The geranylgeranyl diphosphate (GGPP) synthase penG catalyzes the first step in penitrem biosynthesis via conversion of farnesyl pyrophosphate and isopentyl pyrophosphate into geranylgeranyl pyrophosphate (GGPP). Condensation of indole-3-glycerol phosphate with GGPP by the prenyl transferase penC then forms 3-geranylgeranylindole (3-GGI). Epoxidation by the FAD-dependent monooxygenase penM leads to a epoxidized-GGI that is substrate of the terpene cyclase penB for cyclization to yield paspaline. Paspaline is subsequently converted to 13-desoxypaxilline by the cytochrome P450 monooxygenase penP, the latter being then converted to paxilline by the cytochrome P450 monooxygenase penQ. Paxilline is converted to beta-paxitriol via C-10 ketoreduction by the short-chain dehydrogenase PC-15 which can be monoprenylated at the C-20 by the indole diterpene prenyltransferase penD. A two-step elimination (acetylation and elimination) process performed by the O-acetyltransferase PC-16 and the P.simplicissimum ptmI-ortholog not yet identified in P.crustosum, leads to the production of the prenylated form of penijanthine. The FAD-linked oxidoreductase ptmO then converts the prenylated form of penijanthine into PC-M5 which is in turn transformed into PC-M4 by the aromatic dimethylallyltransferase PC-22. A series of oxidation steps involving 4 cytochrome P450 monooxygenases (PC-21, PC-05, PC-23, PC-20) and a FAD-dependent monooxygenase (PC-14) are required for the transformation of PC-M4 to penitrems A and E. Synthesis of these final products is proposed to proceed via penitrems D and C (PC-21, PC-05, PC-14) and penitrems B and F (PC-21, PC-05, PC-14, PC-23). The sequence is that of Cytochrome P450 monooxygenase PC-20 from Penicillium crustosum (Blue mold fungus).